The sequence spans 197 residues: dITP/XTP pyrophosphatase (197 aa).

Residue 11–16 participates in substrate binding; it reads SHNAGK. Mg(2+)-binding residues include Glu42 and Asp71. The Proton acceptor role is filled by Asp71. Residues Ser72, 155–158, Lys178, and 183–184 contribute to the substrate site; these read FGYD and HR.

The protein belongs to the HAM1 NTPase family. In terms of assembly, homodimer. It depends on Mg(2+) as a cofactor.

It catalyses the reaction XTP + H2O = XMP + diphosphate + H(+). It carries out the reaction dITP + H2O = dIMP + diphosphate + H(+). The enzyme catalyses ITP + H2O = IMP + diphosphate + H(+). Its function is as follows. Pyrophosphatase that catalyzes the hydrolysis of nucleoside triphosphates to their monophosphate derivatives, with a high preference for the non-canonical purine nucleotides XTP (xanthosine triphosphate), dITP (deoxyinosine triphosphate) and ITP. Seems to function as a house-cleaning enzyme that removes non-canonical purine nucleotides from the nucleotide pool, thus preventing their incorporation into DNA/RNA and avoiding chromosomal lesions. The polypeptide is dITP/XTP pyrophosphatase (Pseudomonas aeruginosa (strain ATCC 15692 / DSM 22644 / CIP 104116 / JCM 14847 / LMG 12228 / 1C / PRS 101 / PAO1)).